Consider the following 276-residue polypeptide: Eukaryotic translation initiation factor 3 subunit G-2 (276 aa).

Residues 196 to 274 (SAVRISNLSE…LILCVEWSKP (79 aa)) form the RRM domain.

Belongs to the eIF-3 subunit G family. As to quaternary structure, component of the eukaryotic translation initiation factor 3 (eIF-3) complex. The eIF-3 complex interacts with pix.

The protein localises to the cytoplasm. RNA-binding component of the eukaryotic translation initiation factor 3 (eIF-3) complex, which is involved in protein synthesis of a specialized repertoire of mRNAs and, together with other initiation factors, stimulates binding of mRNA and methionyl-tRNAi to the 40S ribosome. The eIF-3 complex specifically targets and initiates translation of a subset of mRNAs involved in cell proliferation. This subunit can bind 18S rRNA. The chain is Eukaryotic translation initiation factor 3 subunit G-2 from Drosophila persimilis (Fruit fly).